The sequence spans 151 residues: MSSRWYPIYQRGNPQLRVFLPNFWLKLVRPANEQPPNVVQFACSMEMTRHDVKNYLEKIYNVPVVNVRTRIALGGTKRDLVLGYITKEEDTKYAYVTLPRTKQFTFPDIFPTDAKQKIEDDKKSLEDAKKNHKKFLDKNKDRPGTPGWFSI.

A compositionally biased stretch (basic and acidic residues) spans 120–143 (DDKKSLEDAKKNHKKFLDKNKDRP). The disordered stretch occupies residues 120-151 (DDKKSLEDAKKNHKKFLDKNKDRPGTPGWFSI).

The protein belongs to the universal ribosomal protein uL23 family. Component of the mitochondrial ribosome large subunit (39S) which comprises a 16S rRNA and about 50 distinct proteins.

It is found in the mitochondrion. This Anopheles gambiae (African malaria mosquito) protein is Large ribosomal subunit protein uL23m (mRpL23).